The chain runs to 67 residues: DNA-directed RNA polymerase subunit omega (67 aa).

Belongs to the RNA polymerase subunit omega family. In terms of assembly, the RNAP catalytic core consists of 2 alpha, 1 beta, 1 beta' and 1 omega subunit. When a sigma factor is associated with the core the holoenzyme is formed, which can initiate transcription.

It carries out the reaction RNA(n) + a ribonucleoside 5'-triphosphate = RNA(n+1) + diphosphate. In terms of biological role, promotes RNA polymerase assembly. Latches the N- and C-terminal regions of the beta' subunit thereby facilitating its interaction with the beta and alpha subunits. This Listeria monocytogenes serotype 4a (strain HCC23) protein is DNA-directed RNA polymerase subunit omega.